The following is a 1388-amino-acid chain: DNA-directed RNA polymerase subunit beta' (1388 aa).

Zn(2+) is bound by residues Cys65, Cys67, Cys80, and Cys83. Mg(2+) contacts are provided by Asp456, Asp458, and Asp460. Zn(2+) is bound by residues Cys812, Cys887, Cys894, and Cys897.

Belongs to the RNA polymerase beta' chain family. As to quaternary structure, the RNAP catalytic core consists of 2 alpha, 1 beta, 1 beta' and 1 omega subunit. When a sigma factor is associated with the core the holoenzyme is formed, which can initiate transcription. It depends on Mg(2+) as a cofactor. Zn(2+) is required as a cofactor.

The catalysed reaction is RNA(n) + a ribonucleoside 5'-triphosphate = RNA(n+1) + diphosphate. Functionally, DNA-dependent RNA polymerase catalyzes the transcription of DNA into RNA using the four ribonucleoside triphosphates as substrates. This Protochlamydia amoebophila (strain UWE25) protein is DNA-directed RNA polymerase subunit beta'.